The following is a 140-amino-acid chain: Prepilin peptidase-dependent protein A (140 aa).

Residues 1 to 23 (MLLLKASAICGKGNEGKRNKKGG) constitute a propeptide that is removed on maturation. The residue at position 24 (F24) is an N-methylphenylalanine. A helical membrane pass occupies residues 24 to 44 (FTLIELTVVLAIMAIILMVIA).

It is found in the membrane. Not yet known. This is Prepilin peptidase-dependent protein A (ppdA) from Clostridium perfringens (strain 13 / Type A).